Here is a 453-residue protein sequence, read N- to C-terminus: UDP-N-acetylmuramoylalanine--D-glutamate ligase (453 aa).

117-123 (GANGKST) serves as a coordination point for ATP.

Belongs to the MurCDEF family.

It localises to the cytoplasm. The catalysed reaction is UDP-N-acetyl-alpha-D-muramoyl-L-alanine + D-glutamate + ATP = UDP-N-acetyl-alpha-D-muramoyl-L-alanyl-D-glutamate + ADP + phosphate + H(+). Its pathway is cell wall biogenesis; peptidoglycan biosynthesis. Cell wall formation. Catalyzes the addition of glutamate to the nucleotide precursor UDP-N-acetylmuramoyl-L-alanine (UMA). The protein is UDP-N-acetylmuramoylalanine--D-glutamate ligase of Methylobacillus flagellatus (strain ATCC 51484 / DSM 6875 / VKM B-1610 / KT).